The sequence spans 441 residues: RNA-binding protein BRN1 (441 aa).

2 consecutive RRM domains span residues 18 to 99 (VKLF…YADG) and 106 to 186 (HKLF…WADT). A compositionally biased stretch (polar residues) spans 258 to 273 (QPNQGNNNALQGTSPD). Residues 258–282 (QPNQGNNNALQGTSPDSVPPRLARR) form a disordered region. Positions 349–427 (ANLFIYNIPR…KKLKVQLKRD (79 aa)) constitute an RRM 3 domain.

As to expression, highly expressed in stems and cauline leaves, and at lower levels in siliques, flowers, roots and rosette leaves.

It localises to the cytoplasm. In terms of biological role, RNA-binding protein involved in the regulation of flowering time. Acts as a repressor of the activity of SOC1, a transcriptional activator of flowering time. Binds to the 3'-UTR of SOC1 mRNA in the cytoplasm and participates in SOC1 mRNA decay, mediated by the distal region of the SOC1 3'-UTR. Acts as a positive regulator of salicylic acid (SA)-mediated immunity. May act on SA signaling-related genes at a post-transcriptional level. This is RNA-binding protein BRN1 from Arabidopsis thaliana (Mouse-ear cress).